The chain runs to 598 residues: MTDLTTSDSTQPAWQTRDHLDDPVIGELSNRFGPEAFVVQATRTGMPVVWVKREQLLEVMTFLRKQPKPYVMLFDLHGVDERLRTHRQGLPAADFSVFYHLLSIERNRDIMLKVALSEKDLHVSTATKIFPNANWYERETWEMFGITFDGHPHLTRIMMPQTWEGHPLRKDYPARATEFDPFVLTKQKEDLEMESLTFKPEDWGMKRGTENEDFMFLNLGPNHPSSHGAFRIVLQLDGEEIVDCVPDVGYHHRGAEKMGERQSWHSYIPYTDRIEYLGGCVNEMPYVLAVEKLAGIEVPDRVKTIRVMLSELFRINSHLLYISTFIQDVGAMTPVFFAFTDRQKVYDLVEAITGFRMHPAWFRIGGVAHDLPRGWERLLRDFLDWMPKRLDSYVKAALQNSILKGRSIGVAAYNAKEALEWGVTGAGLRATGVEFDVRKWRPYSGYENFDFEVPVGNNGDCYDRVMLKVEELRQSLRILEQCYKNMPEGPFKADHPLTTPPPKERTLQHIETLITHFLQVSWGPVMPANESFQMVEATKGINSYYLTSDASTMSYRTRIRTPSYAHLQQIPSVIRGSLVSDLIVYLGSIDFVMSDVDR.

An NADH dehydrogenase I subunit C region spans residues 1–189 (MTDLTTSDST…DPFVLTKQKE (189 aa)). The interval 213–598 (DFMFLNLGPN…IDFVMSDVDR (386 aa)) is NADH dehydrogenase I subunit D.

It in the N-terminal section; belongs to the complex I 30 kDa subunit family. The protein in the C-terminal section; belongs to the complex I 49 kDa subunit family. In terms of assembly, NDH-1 is composed of 13 different subunits. Subunits NuoB, CD, E, F, and G constitute the peripheral sector of the complex.

The protein resides in the cell inner membrane. It carries out the reaction a quinone + NADH + 5 H(+)(in) = a quinol + NAD(+) + 4 H(+)(out). NDH-1 shuttles electrons from NADH, via FMN and iron-sulfur (Fe-S) centers, to quinones in the respiratory chain. The immediate electron acceptor for the enzyme in this species is believed to be ubiquinone. Couples the redox reaction to proton translocation (for every two electrons transferred, four hydrogen ions are translocated across the cytoplasmic membrane), and thus conserves the redox energy in a proton gradient. The protein is NADH-quinone oxidoreductase subunit C/D of Yersinia enterocolitica serotype O:8 / biotype 1B (strain NCTC 13174 / 8081).